The chain runs to 211 residues: FMN-dependent NADH:quinone oxidoreductase 3 (211 aa).

Met102–Phe105 is a binding site for FMN.

This sequence belongs to the azoreductase type 1 family. In terms of assembly, homodimer. It depends on FMN as a cofactor.

The catalysed reaction is 2 a quinone + NADH + H(+) = 2 a 1,4-benzosemiquinone + NAD(+). It catalyses the reaction N,N-dimethyl-1,4-phenylenediamine + anthranilate + 2 NAD(+) = 2-(4-dimethylaminophenyl)diazenylbenzoate + 2 NADH + 2 H(+). Functionally, quinone reductase that provides resistance to thiol-specific stress caused by electrophilic quinones. Also exhibits azoreductase activity. Catalyzes the reductive cleavage of the azo bond in aromatic azo compounds to the corresponding amines. This is FMN-dependent NADH:quinone oxidoreductase 3 from Bacillus cereus (strain ATCC 10987 / NRS 248).